Consider the following 333-residue polypeptide: Adenosine deaminase (333 aa).

His12 and His14 together coordinate Zn(2+). His14, Asp16, and Gly170 together coordinate substrate. Position 197 (His197) interacts with Zn(2+). Glu200 functions as the Proton donor in the catalytic mechanism. Asp278 is a Zn(2+) binding site. Asp279 lines the substrate pocket.

The protein belongs to the metallo-dependent hydrolases superfamily. Adenosine and AMP deaminases family. Adenosine deaminase subfamily. Requires Zn(2+) as cofactor.

The enzyme catalyses adenosine + H2O + H(+) = inosine + NH4(+). It catalyses the reaction 2'-deoxyadenosine + H2O + H(+) = 2'-deoxyinosine + NH4(+). Its function is as follows. Catalyzes the hydrolytic deamination of adenosine and 2-deoxyadenosine. This chain is Adenosine deaminase, found in Klebsiella pneumoniae subsp. pneumoniae (strain ATCC 700721 / MGH 78578).